Here is a 297-residue protein sequence, read N- to C-terminus: Protoheme IX farnesyltransferase (297 aa).

A run of 9 helical transmembrane segments spans residues 23–43 (VTQL…PGLP), 49–69 (VFGT…NCLI), 90–110 (ISAA…MLVL), 117–137 (LTMW…TVIL), 144–164 (NIVI…AAVA), 171–191 (AWVL…ALAL), 215–235 (RLHI…PYII), 238–258 (SGLL…AYAW), and 277–297 (ILYL…GLLA).

This sequence belongs to the UbiA prenyltransferase family. Protoheme IX farnesyltransferase subfamily.

Its subcellular location is the cell inner membrane. It catalyses the reaction heme b + (2E,6E)-farnesyl diphosphate + H2O = Fe(II)-heme o + diphosphate. It functions in the pathway porphyrin-containing compound metabolism; heme O biosynthesis; heme O from protoheme: step 1/1. Functionally, converts heme B (protoheme IX) to heme O by substitution of the vinyl group on carbon 2 of heme B porphyrin ring with a hydroxyethyl farnesyl side group. This Bordetella petrii (strain ATCC BAA-461 / DSM 12804 / CCUG 43448) protein is Protoheme IX farnesyltransferase.